The primary structure comprises 374 residues: Arrestin domain-containing protein 15 (374 aa).

The tract at residues 344–374 is disordered; the sequence is HHLNRSKAKVSKTEQQQRKTRNIVEENPYFR.

It belongs to the arrestin family.

The protein is Arrestin domain-containing protein 15 (arrd-15) of Caenorhabditis elegans.